The sequence spans 212 residues: Large ribosomal subunit protein uL1 (212 aa).

The protein belongs to the universal ribosomal protein uL1 family. In terms of assembly, part of the 50S ribosomal subunit.

Functionally, binds directly to 23S rRNA. Probably involved in E site tRNA release. Protein L1 is also a translational repressor protein, it controls the translation of its operon by binding to its mRNA. This Methanothrix thermoacetophila (strain DSM 6194 / JCM 14653 / NBRC 101360 / PT) (Methanosaeta thermophila) protein is Large ribosomal subunit protein uL1.